The sequence spans 86 residues: uncharacterized protein (86 aa).

It to B.subtilis spore coat protein C.

This is an uncharacterized protein from Bacillus subtilis (strain 168).